A 392-amino-acid polypeptide reads, in one-letter code: FK506-binding protein 4 (392 aa).

Disordered stretches follow at residues 58 to 116 and 161 to 284; these read NPEL…NEID and GNYV…PKTK. Acidic residues-rich tracts occupy residues 73 to 86, 104 to 116, and 172 to 219; these read DGLEEDESESEQEA, SESEDSEDENEID, and SDSD…DASD. 2 positions are modified to phosphoserine: Ser80 and Ser82. Basic and acidic residues-rich tracts occupy residues 220–234 and 252–279; these read IESRLDELVKKDEKK and SAKPAEKKQTTKKDKKAEKVKDSEESKP. In terms of domain architecture, PPIase FKBP-type spans 306–392; sequence GTRVGMRYVG…TFDVKLVSMK (87 aa).

This sequence belongs to the FKBP-type PPIase family. FKBP3/4 subfamily. In terms of assembly, binds to histones H3 and H4. Interacts with NOP53.

The protein localises to the nucleus. The catalysed reaction is [protein]-peptidylproline (omega=180) = [protein]-peptidylproline (omega=0). Functionally, PPIase that acts as a histone chaperone. Histone proline isomerase that increases the rate of cis-trans isomerization at 'Pro-17' (H3P16), 'Pro-31' (H3P30) and 'Pro-39 (H3P38) on the histone H3 N-terminal tail. H3P16 and H3P30 are the major proline targets with little activity shown against H3P38. H3P38 isomerization influences SET2-mediated H3K36 methylation thereby regulating gene expression. This Saccharomyces cerevisiae (strain ATCC 204508 / S288c) (Baker's yeast) protein is FK506-binding protein 4.